We begin with the raw amino-acid sequence, 341 residues long: Fructose-1,6-bisphosphatase, cytosolic (341 aa).

Mg(2+) is bound by residues E71, E100, D121, L123, and D124. Substrate-binding positions include 124–127, N215, Y247, Y267, and K277; that span reads DGSS. A Mg(2+)-binding site is contributed by E283.

The protein belongs to the FBPase class 1 family. Mg(2+) serves as cofactor.

The protein resides in the cytoplasm. The enzyme catalyses beta-D-fructose 1,6-bisphosphate + H2O = beta-D-fructose 6-phosphate + phosphate. This Spinacia oleracea (Spinach) protein is Fructose-1,6-bisphosphatase, cytosolic.